We begin with the raw amino-acid sequence, 561 residues long: Putative transport protein KPN78578_08530 (561 aa).

A run of 5 helical transmembrane segments spans residues 8–28 (LLNG…LCLG), 37–57 (LGNS…HFAI), 66–86 (FMLF…SIFF), 94–114 (MLAL…GKVF), and 158–178 (HLSL…IVGA). RCK C-terminal domains lie at 202–288 (LDTD…SFRN) and 292–373 (VFDR…RIGF). A run of 5 helical transmembrane segments spans residues 383–403 (LLAF…TFQF), 406–426 (FSFG…LGFL), 447–467 (FGLM…INNG), 478–498 (AGLI…AYVL), and 540–560 (AIAN…WPGL).

It belongs to the AAE transporter (TC 2.A.81) family. YbjL subfamily.

It localises to the cell membrane. This chain is Putative transport protein KPN78578_08530, found in Klebsiella pneumoniae subsp. pneumoniae (strain ATCC 700721 / MGH 78578).